The sequence spans 1073 residues: Semaphorin-6D (1073 aa).

Positions 1-20 (MRVFLLCAYILLLMVSQLRA) are cleaved as a signal peptide. The Extracellular portion of the chain corresponds to 21 to 662 (VSFPEDDEPL…GESNQMVHMN (642 aa)). The region spanning 27–512 (DEPLNTVDYH…FSSCIIRIPL (486 aa)) is the Sema domain. Asn-51 is a glycosylation site (N-linked (GlcNAc...) asparagine). 4 disulfides stabilise this stretch: Cys-108/Cys-118, Cys-136/Cys-145, Cys-259/Cys-370, and Cys-284/Cys-329. Residue Asn-283 is glycosylated (N-linked (GlcNAc...) asparagine). N-linked (GlcNAc...) asparagine glycans are attached at residues Asn-435 and Asn-461. Disulfide bonds link Cys-477-Cys-506, Cys-515-Cys-533, Cys-521-Cys-568, and Cys-525-Cys-541. The PSI domain occupies 514–569 (RCERYGSCKKSCIASRDPYCGWLSQGSCGRVTPGMLAEGYEQDTEFGNTAHLGDCH). Asn-631 carries an N-linked (GlcNAc...) asparagine glycan. A helical membrane pass occupies residues 663–683 (VLITCVFAAFVLGAFIAGVAV). Topologically, residues 684–1073 (YCYRDMFVRK…SVRPLNKYTY (390 aa)) are cytoplasmic. Phosphoserine is present on residues Ser-723, Ser-734, and Ser-744. 5 disordered regions span residues 744–775 (SRKELPPNGDTKSMVMDHRGQPPELAALPTPE), 787–825 (AMKSHSEKAHGHGASRKETPQFFPSSPPPHSPLSHGHIP), 839–874 (TSFSNSNAHKAEKKLQNIDHPLTKSSSKRDHRRSVD), 914–1005 (SMSE…PTPT), and 1021–1073 (LQPS…KYTY). Residue Thr-773 is modified to Phosphothreonine. Basic and acidic residues predominate over residues 790–805 (SHSEKAHGHGASRKET). Ser-931, Ser-957, and Ser-983 each carry phosphoserine. Residues 931-942 (SPPSTLPRNSPT) are compositionally biased toward polar residues. Polar residues-rich tracts occupy residues 980-995 (NLNSPNGVLLSRQPSM) and 1021-1037 (LQPSLSRQSSYTSNGTL).

The protein belongs to the semaphorin family.

The protein resides in the cell membrane. It localises to the cytoplasm. In terms of biological role, shows growth cone collapsing activity on dorsal root ganglion (DRG) neurons in vitro. May be a stop signal for the DRG neurons in their target areas, and possibly also for other neurons. May also be involved in the maintenance and remodeling of neuronal connections. Ligand of TREM2 with PLXNA1 as coreceptor in dendritic cells, plays a role in the generation of immune responses and skeletal homeostasis. The chain is Semaphorin-6D from Homo sapiens (Human).